We begin with the raw amino-acid sequence, 843 residues long: Protein P (843 aa).

A terminal protein domain (TP) region spans residues 1-177 (MPLSYQHFRK…FCGSPYSWEQ (177 aa)). The segment at 178–346 (ELQHGRLVFQ…YCLSHLINLH (169 aa)) is spacer. 2 disordered regions span residues 218–243 (LKQS…SGSI) and 291–315 (TAQR…AGSQ). The tract at residues 347–690 (EDWGPCIEHG…YLNLYPVARQ (344 aa)) is polymerase/reverse transcriptase domain (RT). Residues 357–600 (EHNIRIPRTP…YSLNFMGYVI (244 aa)) form the Reverse transcriptase domain. 3 residues coordinate Mg(2+): Asp-429, Asp-551, and Asp-552.

The protein belongs to the hepadnaviridae P protein family.

The enzyme catalyses DNA(n) + a 2'-deoxyribonucleoside 5'-triphosphate = DNA(n+1) + diphosphate. The catalysed reaction is Endonucleolytic cleavage to 5'-phosphomonoester.. Its activity is regulated as follows. Activated by host HSP70 and HSP40 in vitro to be able to bind the epsilon loop of the pgRNA. Because deletion of the RNase H region renders the protein partly chaperone-independent, the chaperones may be needed indirectly to relieve occlusion of the RNA-binding site by this domain. Inhibited by several reverse-transcriptase inhibitors: Lamivudine, Adefovir and Entecavir. Functionally, multifunctional enzyme that converts the viral RNA genome into dsDNA in viral cytoplasmic capsids. This enzyme displays a DNA polymerase activity that can copy either DNA or RNA templates, and a ribonuclease H (RNase H) activity that cleaves the RNA strand of RNA-DNA heteroduplexes in a partially processive 3'- to 5'-endonucleasic mode. Neo-synthesized pregenomic RNA (pgRNA) are encapsidated together with the P protein, and reverse-transcribed inside the nucleocapsid. Initiation of reverse-transcription occurs first by binding the epsilon loop on the pgRNA genome, and is initiated by protein priming, thereby the 5'-end of (-)DNA is covalently linked to P protein. Partial (+)DNA is synthesized from the (-)DNA template and generates the relaxed circular DNA (RC-DNA) genome. After budding and infection, the RC-DNA migrates in the nucleus, and is converted into a plasmid-like covalently closed circular DNA (cccDNA). The activity of P protein does not seem to be necessary for cccDNA generation, and is presumably released from (+)DNA by host nuclear DNA repair machinery. This is Protein P from Hepatitis B virus genotype C subtype ayw (isolate Australia/AustRC/1992) (HBV-C).